The sequence spans 269 residues: 4-hydroxy-tetrahydrodipicolinate reductase (269 aa).

NAD(+) is bound by residues 10–15, glutamate 36, 99–101, and 123–126; these read GANGRM, GTT, and AANF. Histidine 156 acts as the Proton donor/acceptor in catalysis. Histidine 157 contacts (S)-2,3,4,5-tetrahydrodipicolinate. The active-site Proton donor is the lysine 160. Position 166-167 (166-167) interacts with (S)-2,3,4,5-tetrahydrodipicolinate; the sequence is GT.

It belongs to the DapB family.

The protein localises to the cytoplasm. It catalyses the reaction (S)-2,3,4,5-tetrahydrodipicolinate + NAD(+) + H2O = (2S,4S)-4-hydroxy-2,3,4,5-tetrahydrodipicolinate + NADH + H(+). It carries out the reaction (S)-2,3,4,5-tetrahydrodipicolinate + NADP(+) + H2O = (2S,4S)-4-hydroxy-2,3,4,5-tetrahydrodipicolinate + NADPH + H(+). Its pathway is amino-acid biosynthesis; L-lysine biosynthesis via DAP pathway; (S)-tetrahydrodipicolinate from L-aspartate: step 4/4. In terms of biological role, catalyzes the conversion of 4-hydroxy-tetrahydrodipicolinate (HTPA) to tetrahydrodipicolinate. This is 4-hydroxy-tetrahydrodipicolinate reductase from Neisseria meningitidis serogroup B (strain ATCC BAA-335 / MC58).